Consider the following 354-residue polypeptide: Magnesium-chelatase subunit ChlI (354 aa).

47–54 (GDRGTGKS) is an ATP binding site. Cys-282 and Cys-324 form a disulfide bridge.

This sequence belongs to the Mg-chelatase subunits D/I family. In terms of assembly, the magnesium chelatase complex is a heterotrimer consisting of subunits CHLI, CHLD and CHLH.

It localises to the plastid. The protein localises to the chloroplast. The enzyme catalyses protoporphyrin IX + Mg(2+) + ATP + H2O = Mg-protoporphyrin IX + ADP + phosphate + 3 H(+). It participates in porphyrin-containing compound metabolism; chlorophyll biosynthesis. Its activity is regulated as follows. Redox regulation; active in reducing conditions, inactive in oxidizing conditions. Thioredoxins f and m mediate the reversible reductive activation of oxidized CHLI. In terms of biological role, involved in chlorophyll biosynthesis. Catalyzes the insertion of magnesium ion into protoporphyrin IX to yield Mg-protoporphyrin IX. The magnesium-chelatase is a complex of three subunits, CHLI, CHLD and CHLH. The reaction takes place in two steps, with an ATP-dependent activation followed by an ATP-dependent chelation step. The protein is Magnesium-chelatase subunit ChlI (chlI) of Chlorella vulgaris (Green alga).